A 784-amino-acid polypeptide reads, in one-letter code: Melanoma-associated antigen D1 (784 aa).

Residues 41 to 67 (PTNQATAAASGPNASPQSSQPPSANEV) are disordered. The span at 47 to 65 (AAASGPNASPQSSQPPSAN) shows a compositional bias: low complexity. Y97 is modified (phosphotyrosine). Composition is skewed to polar residues over residues 195 to 214 (PTAE…TSQA), 232 to 246 (AQTS…NLES), 259 to 269 (NNLNVEESSSG), and 306 to 320 (LAWQ…QPAR). The interval 195–339 (PTAETQTQNI…PARQTPPAWQ (145 aa)) is disordered. 19 repeat units span residues 302 to 307 (WQTPLA), 308 to 313 (WQNPSG), 314 to 319 (WQNQPA), 338 to 343 (WQNPVA), 344 to 349 (WQNPVI), 350 to 355 (WPNPVI), 356 to 361 (WQNPVI), 362 to 367 (WPNPIV), 368 to 373 (WPGPVV), 374 to 379 (WPNPLA), 380 to 385 (WQNPPG), 386 to 391 (WQTPPG), 392 to 397 (WQTPPG), 398 to 403 (WQGPPD), 404 to 409 (WQGPPD), 410 to 415 (WPLPPD), 416 to 421 (WPLPPD), 422 to 427 (WPLPTD), and 428 to 433 (WPLPPD). The 22 X 6 AA tandem repeats of W-[PQ]-X-P-X-X stretch occupies residues 302–450 (WQTPLAWQNP…VPPDWQNLRP (149 aa)). Residues 379-418 (AWQNPPGWQTPPGWQTPPGWQGPPDWQGPPDWPLPPDWPL) form a disordered region. Low complexity predominate over residues 383–403 (PPGWQTPPGWQTPPGWQGPPD). A compositionally biased stretch (pro residues) spans 404 to 418 (WQGPPDWPLPPDWPL). The stretch at 434-438 (WIPTD) is one 20; approximate repeat. 2 repeat units span residues 439 to 444 (WPVPPD) and 445 to 450 (WQNLRP). Residues 441-471 (VPPDWQNLRPSPNLRPSPNSRASQNLGASQP) are disordered. Residues 447–461 (NLRPSPNLRPSPNSR) are compositionally biased toward low complexity. One can recognise an MAGE domain in the interval 477-675 (LQERANKLVK…RDWTAQFMEA (199 aa)).

Interacts with DLX5, DLX7 and MSX2 and forms homomultimers. Interacts with UNC5A. Interacts with TRIM28 and PJA1. Interacts with NGFR/p75NTR and RORA.

The protein resides in the cytoplasm. The protein localises to the cell membrane. It is found in the nucleus. Functionally, involved in the apoptotic response after nerve growth factor (NGF) binding in neuronal cells. Inhibits cell cycle progression, and facilitates NGFR-mediated apoptosis. May act as a regulator of the function of DLX family members. May enhance ubiquitin ligase activity of RING-type zinc finger-containing E3 ubiquitin-protein ligases. Proposed to act through recruitment and/or stabilization of the Ubl-conjugating enzyme (E2) at the E3:substrate complex. Plays a role in the circadian rhythm regulation. May act as RORA co-regulator, modulating the expression of core clock genes such as BMAL1 and NFIL3, induced, or NR1D1, repressed. This chain is Melanoma-associated antigen D1 (MAGED1), found in Sus scrofa (Pig).